The sequence spans 1310 residues: Rho family-interacting cell polarization regulator 2 (1310 aa).

Residues Ser123 and Ser178 each carry the phosphoserine modification. The tract at residues 196–254 is involved in cell filopodia formation; sequence MHNLGHKNTNTPKEPQPKRVEEVYRALKNGLDEYLEFHQTELDKLTAQLKDMKRNSRLG. Residues 224 to 253 adopt a coiled-coil conformation; the sequence is NGLDEYLEFHQTELDKLTAQLKDMKRNSRL. Ser508 is subject to Phosphoserine. Residues 588 to 608 are compositionally biased toward polar residues; sequence SSLSSQNEGTEDSSSASSRNS. The segment at 588–639 is disordered; sequence SSLSSQNEGTEDSSSASSRNSLGEDHEPKSHSKSDTVEPKKPSVDARSGTES. Positions 609-631 are enriched in basic and acidic residues; that stretch reads LGEDHEPKSHSKSDTVEPKKPSV. Position 682 is a phosphoserine (Ser682).

This sequence belongs to the RIPOR family. In terms of assembly, homooligomer; homooligomerization is regulated by RHOC and leads to the formation of concatemers through the association of N- and C-termini. Interacts (phosphorylated form) with 14-3-3 proteins; these interactions occur during myogenic cell differentiation and also induces T cell proliferation arrest. Interacts (phosphorylated form) with HDAC6; this interaction occurs during early myogenic differentiation, prevents HDAC6 to deacetylate tubulin and also induces T cell proliferation arrest. Interacts with DYSF; this interaction occurs during early myogenic differentiation. Interacts with MYOF. Interacts (via active GTP- or inactive GDP-bound forms) with RHOA; this interaction is direct, blocks the loading of GTP to RHOA and decreases upon chemokine CCL19 stimulation in primary T lymphocytes. Interacts with RHOC. Interacts (via phosphorylated form) with YWHAB; this interaction occurs in a chemokine-dependent manner and does not compete for binding of RIPOR2 with RHOA nor blocks inhibition of RIPOR2-mediated RHOA activity. Interacts with YWHAE. Interacts with YWHAQ. Phosphorylated. Chemokine-induced phosphorylation in neutrophils occurs in a PKC- and AKT-dependent manner, resulting in RIPOR2 interaction with YWHAB and stabilization. Phosphorylated by PKCA, AKT1 and MAPKAPK1A; in vitro. In terms of tissue distribution, expressed in the cochlea (at protein level).

Its subcellular location is the cytoplasm. The protein localises to the cytoskeleton. The protein resides in the cell projection. It is found in the filopodium. It localises to the apical cell membrane. Its subcellular location is the stereocilium. The protein localises to the stereocilium membrane. Acts as an inhibitor of the small GTPase RHOA and plays several roles in the regulation of myoblast and hair cell differentiation, lymphocyte T proliferation and neutrophil polarization. Plays a role in fetal mononuclear myoblast differentiation by promoting filopodia and myotube formation. Maintains naive T lymphocytes in a quiescent state and prevents chemokine-induced T lymphocyte responses, such as cell adhesion, polarization and migration. Involved also in the regulation of neutrophil polarization, chemotaxis and adhesion. Required for normal development of inner and outer hair cell stereocilia within the cochlea of the inner ear. Plays a role for maintaining the structural organization of the basal domain of stereocilia. Involved in mechanosensory hair cell function. Required for normal hearing. The chain is Rho family-interacting cell polarization regulator 2 from Rattus norvegicus (Rat).